The primary structure comprises 156 residues: SsrA-binding protein (156 aa).

It belongs to the SmpB family.

It is found in the cytoplasm. Its function is as follows. Required for rescue of stalled ribosomes mediated by trans-translation. Binds to transfer-messenger RNA (tmRNA), required for stable association of tmRNA with ribosomes. tmRNA and SmpB together mimic tRNA shape, replacing the anticodon stem-loop with SmpB. tmRNA is encoded by the ssrA gene; the 2 termini fold to resemble tRNA(Ala) and it encodes a 'tag peptide', a short internal open reading frame. During trans-translation Ala-aminoacylated tmRNA acts like a tRNA, entering the A-site of stalled ribosomes, displacing the stalled mRNA. The ribosome then switches to translate the ORF on the tmRNA; the nascent peptide is terminated with the 'tag peptide' encoded by the tmRNA and targeted for degradation. The ribosome is freed to recommence translation, which seems to be the essential function of trans-translation. The protein is SsrA-binding protein of Staphylococcus epidermidis (strain ATCC 35984 / DSM 28319 / BCRC 17069 / CCUG 31568 / BM 3577 / RP62A).